Reading from the N-terminus, the 224-residue chain is Peroxiredoxin-6 (224 aa).

The 165-residue stretch at 5-169 folds into the Thioredoxin domain; sequence LLLGDVAPNF…ILRVVISLQL (165 aa). Positions 31-40 are required and sufficient for targeting to lysosomes and lamellar bodies; that stretch reads DSWGILFSHP. A Phosphothreonine modification is found at Thr-44. Cys-47 functions as the Cysteine sulfenic acid (-SOH) intermediate; for peroxidase activity in the catalytic mechanism. N6-acetyllysine is present on Lys-63. A Phosphotyrosine modification is found at Tyr-89. The active-site For phospholipase activity is Asp-140. Phosphothreonine; by MAPK is present on Thr-177. The residue at position 209 (Lys-209) is an N6-acetyllysine; alternate. Lys-209 is subject to N6-succinyllysine; alternate.

The protein belongs to the peroxiredoxin family. Prx6 subfamily. In terms of assembly, homodimer. Interacts with GSTP1; mediates PRDX6 glutathionylation and regeneration. Interacts with APEX1. Interacts with STH. May interact with FAM168B. May interact with HTR2A. Post-translationally, irreversibly inactivated by overoxidation of Cys-47 to sulfinic acid (Cys-SO(2)H) and sulfonic acid (Cys-SO(3)H) forms upon oxidative stress. Phosphorylation at Thr-177 by MAP kinases increases the phospholipase activity of the enzyme. The phosphorylated form exhibits a greater lysophosphatidylcholine acyltransferase activity compared to the non-phosphorylated form.

The protein localises to the cytoplasm. The protein resides in the lysosome. The enzyme catalyses a hydroperoxide + 2 glutathione = an alcohol + glutathione disulfide + H2O. The catalysed reaction is a 1,2-diacyl-sn-glycero-3-phosphocholine + H2O = a 1-acyl-sn-glycero-3-phosphocholine + a fatty acid + H(+). It carries out the reaction a 1-acyl-sn-glycero-3-phosphocholine + an acyl-CoA = a 1,2-diacyl-sn-glycero-3-phosphocholine + CoA. It catalyses the reaction 1-hexadecanoyl-sn-glycero-3-phosphocholine + hexadecanoyl-CoA = 1,2-dihexadecanoyl-sn-glycero-3-phosphocholine + CoA. The enzyme catalyses 1,2-dihexadecanoyl-sn-glycero-3-phosphocholine + H2O = 1-hexadecanoyl-sn-glycero-3-phosphocholine + hexadecanoate + H(+). With respect to regulation, MJ33 or lithium;[(2R)-1-hexadecoxy-3-(2,2,2-trifluoroethoxy)propan-2-yl] methyl phosphate inhibits its phospholipase A2 activity. CI-976 or 2,2-Dimethyl-N-(2,4,6-trimethoxyphenyl)dodecanamide inhibits its lysophosphatidylcholine acyltransferase activity. Its function is as follows. Thiol-specific peroxidase that catalyzes the reduction of hydrogen peroxide and organic hydroperoxides to water and alcohols, respectively. Can reduce H(2)O(2) and short chain organic, fatty acid, and phospholipid hydroperoxides. Also has phospholipase activity, can therefore either reduce the oxidized sn-2 fatty acyl group of phospholipids (peroxidase activity) or hydrolyze the sn-2 ester bond of phospholipids (phospholipase activity). These activities are dependent on binding to phospholipids at acidic pH and to oxidized phospholipds at cytosolic pH. Plays a role in cell protection against oxidative stress by detoxifying peroxides and in phospholipid homeostasis. Exhibits acyl-CoA-dependent lysophospholipid acyltransferase which mediates the conversion of lysophosphatidylcholine (1-acyl-sn-glycero-3-phosphocholine or LPC) into phosphatidylcholine (1,2-diacyl-sn-glycero-3-phosphocholine or PC). Shows a clear preference for LPC as the lysophospholipid and for palmitoyl CoA as the fatty acyl substrate. This is Peroxiredoxin-6 (PRDX6) from Homo sapiens (Human).